Here is a 175-residue protein sequence, read N- to C-terminus: Thioredoxin M3, chloroplastic (175 aa).

The N-terminal 59 residues, 1 to 59 (MAATATACPAPPPPRSLYRGVALAAPGRRRAGYGASSSAARRWPGCRRRWAAHRIRTVS), are a transit peptide targeting the chloroplast. A Thioredoxin domain is found at 61–171 (AYSPRGAKTI…YVRAIEKSIS (111 aa)). Active-site nucleophile residues include C95 and C98. A disulfide bridge links C95 with C98.

It belongs to the thioredoxin family. Plant M-type subfamily.

It localises to the plastid. The protein localises to the chloroplast. Its function is as follows. Probable thiol-disulfide oxidoreductase that may be involved in the redox regulation of chloroplastic enzymes. This Oryza sativa subsp. japonica (Rice) protein is Thioredoxin M3, chloroplastic.